The chain runs to 701 residues: Elongation factor G (701 aa).

One can recognise a tr-type G domain in the interval 11–287 (TKVRNIGIMA…AVIDYLPSPL (277 aa)). GTP contacts are provided by residues 20–27 (AHIDAGKT), 84–88 (DTPGH), and 138–141 (NKMD).

Belongs to the TRAFAC class translation factor GTPase superfamily. Classic translation factor GTPase family. EF-G/EF-2 subfamily.

Its subcellular location is the cytoplasm. Catalyzes the GTP-dependent ribosomal translocation step during translation elongation. During this step, the ribosome changes from the pre-translocational (PRE) to the post-translocational (POST) state as the newly formed A-site-bound peptidyl-tRNA and P-site-bound deacylated tRNA move to the P and E sites, respectively. Catalyzes the coordinated movement of the two tRNA molecules, the mRNA and conformational changes in the ribosome. The sequence is that of Elongation factor G from Mycobacterium avium (strain 104).